The sequence spans 443 residues: 2-hydroxyethylphosphonate dioxygenase (443 aa).

One can recognise an HTH cro/C1-type 1 domain in the interval 8 to 63 (LAHWMNARKYTAAQTADLAGLPLDDLRRLLGDEANEPDPAAATALAEALSVEPSQL). Residue K16 coordinates substrate. Residues 19–38 (AAQTADLAGLPLDDLRRLLG) constitute a DNA-binding region (H-T-H motif). The substrate site is built by Y98 and N126. H129 serves as a coordination point for Fe cation. E176, H182, and S196 together coordinate substrate. H182 is a Fe cation binding site. The HTH cro/C1-type 2 domain occupies 234–290 (VLDLFLARRAHTRTSAAEAAGVPPADLEAALRSPASETGLTVLRTLGRALGFDYRVL). The H-T-H motif DNA-binding region spans 245 to 265 (TRTSAAEAAGVPPADLEAALR).

This sequence belongs to the non-heme iron-dependent dioxygenase family. In terms of assembly, homodimer. Fe(2+) is required as a cofactor.

It catalyses the reaction 2-hydroxyethylphosphonate + O2 = hydroxymethylphosphonate + formate + H(+). Its pathway is secondary metabolite biosynthesis; bialaphos biosynthesis. In terms of biological role, non-heme-dependent dioxygenase that catalyzes the conversion of 2-hydroxyethylphosphonate (HEP) to hydroxymethylphosphonate (HMP) in the biosynthesis of phosphinothricin tripeptide (PTT), also known as bialaphos (BA), a natural-product antibiotic and potent herbicide. PTT contains the unusual amino acid phosphinothricin attached to 2 alanine residues. Synthetic phosphinothricin (glufosinate) is a key component of commercial herbicides. The chain is 2-hydroxyethylphosphonate dioxygenase (hepD) from Streptomyces viridochromogenes (strain DSM 40736 / JCM 4977 / BCRC 1201 / Tue 494).